The following is a 521-amino-acid chain: Glucose-1-phosphate adenylyltransferase small subunit, chloroplastic/amyloplastic (521 aa).

Positions 1 to 32 are disordered; it reads MAASIGALKSSPSSNNCINERRNDSTRAVSSR. The N-terminal 72 residues, 1–72, are a transit peptide targeting the chloroplast; it reads MAASIGALKS…RSPMIVSPKA (72 aa). Lysine 268 is a binding site for substrate. An allosteric regulation region spans residues 444 to 454; sequence TDADRKLLAAK.

It belongs to the bacterial/plant glucose-1-phosphate adenylyltransferase family. Heterotetramer. Leaves and tubers.

The protein resides in the plastid. The protein localises to the chloroplast. Its subcellular location is the amyloplast. It catalyses the reaction alpha-D-glucose 1-phosphate + ATP + H(+) = ADP-alpha-D-glucose + diphosphate. Its pathway is glycan biosynthesis; starch biosynthesis. Activated by 3'phosphoglycerate, inhibited by orthophosphate. Allosteric regulation. In terms of biological role, this protein plays a role in synthesis of starch. It catalyzes the synthesis of the activated glycosyl donor, ADP-glucose from Glc-1-P and ATP. This Solanum tuberosum (Potato) protein is Glucose-1-phosphate adenylyltransferase small subunit, chloroplastic/amyloplastic.